The primary structure comprises 112 residues: Urease subunit beta (112 aa).

The protein belongs to the urease beta subunit family. As to quaternary structure, heterotrimer of UreA (gamma), UreB (beta) and UreC (alpha) subunits. Three heterotrimers associate to form the active enzyme.

It localises to the cytoplasm. The catalysed reaction is urea + 2 H2O + H(+) = hydrogencarbonate + 2 NH4(+). The protein operates within nitrogen metabolism; urea degradation; CO(2) and NH(3) from urea (urease route): step 1/1. The polypeptide is Urease subunit beta (Thioalkalivibrio sulfidiphilus (strain HL-EbGR7)).